We begin with the raw amino-acid sequence, 264 residues long: SPRY domain-containing SOCS box protein 2 (264 aa).

Residues 1-18 are compositionally biased toward polar residues; it reads MGQTALARGSSSTPSSHA. A disordered region spans residues 1-53; the sequence is MGQTALARGSSSTPSSHALYSDLSPPEGLEELLSAPPPDLGAQRHHGWNPKDC. Low complexity predominate over residues 21 to 34; it reads SDLSPPEGLEELLS. Residues 26-221 form the B30.2/SPRY domain; the sequence is PEGLEELLSA…VRIRYLGERR (196 aa). Residues 222–264 enclose the SOCS box domain; it reads AEEPQSLLHLSRLCVRHALGDTRLGQISSLPLPPAMKRYLLYK.

Belongs to the SPSB family. In terms of assembly, component of the probable ECS(SPSB2) E3 ubiquitin-protein ligase complex which contains CUL5, RNF7/RBX2, Elongin BC complex and SPSB2. Interacts with CUL5, RNF7, ELOB and ELOC. Interacts with MET. Interacts (via B30.2/SPRY domain) with PAWR; this interaction occurs in association with the Elongin BC complex. Interacts with NOS2.

The protein localises to the cytoplasm. The protein resides in the cytosol. Its pathway is protein modification; protein ubiquitination. Functionally, substrate recognition component of a SCF-like ECS (Elongin BC-CUL2/5-SOCS-box protein) E3 ubiquitin-protein ligase complex which mediates the ubiquitination and subsequent proteasomal degradation of target proteins. Negatively regulates nitric oxide (NO) production and limits cellular toxicity in activated macrophages by mediating the ubiquitination and proteasomal degradation of NOS2. Acts as a bridge which links NOS2 with the ECS E3 ubiquitin ligase complex components ELOC and CUL5. The polypeptide is SPRY domain-containing SOCS box protein 2 (Spsb2) (Rattus norvegicus (Rat)).